A 250-amino-acid polypeptide reads, in one-letter code: 2,3-bisphosphoglycerate-dependent phosphoglycerate mutase (250 aa).

Substrate is bound by residues 10 to 17 (RHGESQWN), 23 to 24 (TG), R62, 89 to 92 (ERHY), K100, 116 to 117 (RR), and 185 to 186 (GN). Catalysis depends on H11, which acts as the Tele-phosphohistidine intermediate. The active-site Proton donor/acceptor is E89.

The protein belongs to the phosphoglycerate mutase family. BPG-dependent PGAM subfamily. As to quaternary structure, homodimer.

The enzyme catalyses (2R)-2-phosphoglycerate = (2R)-3-phosphoglycerate. It participates in carbohydrate degradation; glycolysis; pyruvate from D-glyceraldehyde 3-phosphate: step 3/5. Functionally, catalyzes the interconversion of 2-phosphoglycerate and 3-phosphoglycerate. This Yersinia pseudotuberculosis serotype IB (strain PB1/+) protein is 2,3-bisphosphoglycerate-dependent phosphoglycerate mutase.